The primary structure comprises 197 residues: ATP-dependent Clp protease proteolytic subunit 2 (197 aa).

Residue serine 97 is the Nucleophile of the active site. Histidine 122 is an active-site residue.

The protein belongs to the peptidase S14 family. As to quaternary structure, fourteen ClpP subunits assemble into 2 heptameric rings which stack back to back to give a disk-like structure with a central cavity, resembling the structure of eukaryotic proteasomes.

The protein localises to the cytoplasm. It carries out the reaction Hydrolysis of proteins to small peptides in the presence of ATP and magnesium. alpha-casein is the usual test substrate. In the absence of ATP, only oligopeptides shorter than five residues are hydrolyzed (such as succinyl-Leu-Tyr-|-NHMec, and Leu-Tyr-Leu-|-Tyr-Trp, in which cleavage of the -Tyr-|-Leu- and -Tyr-|-Trp bonds also occurs).. In terms of biological role, cleaves peptides in various proteins in a process that requires ATP hydrolysis. Has a chymotrypsin-like activity. Plays a major role in the degradation of misfolded proteins. In Leptospira interrogans serogroup Icterohaemorrhagiae serovar copenhageni (strain Fiocruz L1-130), this protein is ATP-dependent Clp protease proteolytic subunit 2.